Reading from the N-terminus, the 120-residue chain is NAD(P)H-quinone oxidoreductase subunit 3, chloroplastic (120 aa).

3 consecutive transmembrane segments (helical) span residues 9-29 (IFWA…LISG), 64-84 (MFAL…PWAM), and 88-108 (VLGV…ILGL).

This sequence belongs to the complex I subunit 3 family. In terms of assembly, NDH is composed of at least 16 different subunits, 5 of which are encoded in the nucleus.

It is found in the plastid. It localises to the chloroplast thylakoid membrane. It carries out the reaction a plastoquinone + NADH + (n+1) H(+)(in) = a plastoquinol + NAD(+) + n H(+)(out). It catalyses the reaction a plastoquinone + NADPH + (n+1) H(+)(in) = a plastoquinol + NADP(+) + n H(+)(out). In terms of biological role, NDH shuttles electrons from NAD(P)H:plastoquinone, via FMN and iron-sulfur (Fe-S) centers, to quinones in the photosynthetic chain and possibly in a chloroplast respiratory chain. The immediate electron acceptor for the enzyme in this species is believed to be plastoquinone. Couples the redox reaction to proton translocation, and thus conserves the redox energy in a proton gradient. The polypeptide is NAD(P)H-quinone oxidoreductase subunit 3, chloroplastic (Aethionema cordifolium (Lebanon stonecress)).